Here is a 271-residue protein sequence, read N- to C-terminus: Phosphatidylglycerol--prolipoprotein diacylglyceryl transferase (271 aa).

Transmembrane regions (helical) follow at residues Ile21–Ala41, Leu60–Tyr80, Val95–Trp115, Phe124–Leu144, Ser176–Ile196, Gly203–Val223, and Leu230–Gly250. Residue Arg143 coordinates a 1,2-diacyl-sn-glycero-3-phospho-(1'-sn-glycerol).

This sequence belongs to the Lgt family.

The protein localises to the cell inner membrane. The catalysed reaction is L-cysteinyl-[prolipoprotein] + a 1,2-diacyl-sn-glycero-3-phospho-(1'-sn-glycerol) = an S-1,2-diacyl-sn-glyceryl-L-cysteinyl-[prolipoprotein] + sn-glycerol 1-phosphate + H(+). It functions in the pathway protein modification; lipoprotein biosynthesis (diacylglyceryl transfer). In terms of biological role, catalyzes the transfer of the diacylglyceryl group from phosphatidylglycerol to the sulfhydryl group of the N-terminal cysteine of a prolipoprotein, the first step in the formation of mature lipoproteins. The protein is Phosphatidylglycerol--prolipoprotein diacylglyceryl transferase of Vibrio vulnificus (strain YJ016).